The chain runs to 261 residues: Type III pantothenate kinase (261 aa).

6–13 (DAGNSNIT) is an ATP binding site. Substrate contacts are provided by residues Tyr-100 and 107–110 (GADR). Asp-109 functions as the Proton acceptor in the catalytic mechanism. K(+) is bound at residue Asp-129. Position 132 (Thr-132) interacts with ATP. Thr-184 contacts substrate.

This sequence belongs to the type III pantothenate kinase family. Homodimer. The cofactor is NH4(+). Requires K(+) as cofactor.

Its subcellular location is the cytoplasm. The catalysed reaction is (R)-pantothenate + ATP = (R)-4'-phosphopantothenate + ADP + H(+). It functions in the pathway cofactor biosynthesis; coenzyme A biosynthesis; CoA from (R)-pantothenate: step 1/5. Catalyzes the phosphorylation of pantothenate (Pan), the first step in CoA biosynthesis. The polypeptide is Type III pantothenate kinase (Solibacter usitatus (strain Ellin6076)).